We begin with the raw amino-acid sequence, 157 residues long: Endoribonuclease YbeY (157 aa).

Positions 114, 118, and 124 each coordinate Zn(2+).

This sequence belongs to the endoribonuclease YbeY family. Requires Zn(2+) as cofactor.

It localises to the cytoplasm. In terms of biological role, single strand-specific metallo-endoribonuclease involved in late-stage 70S ribosome quality control and in maturation of the 3' terminus of the 16S rRNA. The protein is Endoribonuclease YbeY of Edwardsiella ictaluri (strain 93-146).